The following is a 150-amino-acid chain: UPF0178 protein PSEEN5341 (150 aa).

It belongs to the UPF0178 family.

This is UPF0178 protein PSEEN5341 from Pseudomonas entomophila (strain L48).